A 448-amino-acid polypeptide reads, in one-letter code: GA-binding protein subunit beta-2 (448 aa).

ANK repeat units lie at residues 5 to 34 (DLGK…PFTT), 37 to 66 (LGTS…SRDA), 70 to 99 (VDRT…DVNA), 103 to 132 (LKMT…DVHA), and 136 to 166 (FDKS…QVNV). Serine 256 bears the Phosphoserine mark. 2 disordered regions span residues 325–354 (EEEE…GNER) and 420–448 (ELEE…TVSS). Residues 337-354 (RIGEKTNSVEESKEGNER) are compositionally biased toward basic and acidic residues. Residues 345–395 (VEESKEGNERELLQQQLQEANRRAQEYRHQLLKKEQEAEQYRLKLEAIARQ) adopt a coiled-coil conformation. Residues 428–448 (VTGSAGTTEPHTRVSMATVSS) show a composition bias toward polar residues.

As to quaternary structure, heterotetramer of two alpha and two beta subunits. The C-terminal is necessary for the formation of a heterotetrameric GABP-alpha-2/beta-2 complex, and also facilitates homotypic dimerization. Interacts with ADGRB2.

Its subcellular location is the nucleus. Functionally, may function as transcription factor capable of interacting with purine rich repeats (GA repeats). The sequence is that of GA-binding protein subunit beta-2 (GABPB2) from Homo sapiens (Human).